We begin with the raw amino-acid sequence, 88 residues long: HssA/B-like protein 13 (88 aa).

The protein belongs to the hssA/B family.

This is HssA/B-like protein 13 (hssl13) from Dictyostelium discoideum (Social amoeba).